The sequence spans 104 residues: Large ribosomal subunit protein bL21 (104 aa).

The protein belongs to the bacterial ribosomal protein bL21 family. Part of the 50S ribosomal subunit. Contacts protein L20.

Functionally, this protein binds to 23S rRNA in the presence of protein L20. The polypeptide is Large ribosomal subunit protein bL21 (Helicobacter hepaticus (strain ATCC 51449 / 3B1)).